We begin with the raw amino-acid sequence, 230 residues long: Ribonuclease 3 (230 aa).

Residues 10–133 (DPRLLSRIGY…IIGAIYLDSS (124 aa)) enclose the RNase III domain. Glu46 is a binding site for Mg(2+). Asp50 is a catalytic residue. Residues Asp119 and Glu122 each coordinate Mg(2+). Glu122 is a catalytic residue. In terms of domain architecture, DRBM spans 161–230 (DPKSRLQEYL…AAEILKLLEQ (70 aa)).

This sequence belongs to the ribonuclease III family. Homodimer. Mg(2+) serves as cofactor.

Its subcellular location is the cytoplasm. It carries out the reaction Endonucleolytic cleavage to 5'-phosphomonoester.. Functionally, digests double-stranded RNA. Involved in the processing of primary rRNA transcript to yield the immediate precursors to the large and small rRNAs (23S and 16S). Processes some mRNAs, and tRNAs when they are encoded in the rRNA operon. Processes pre-crRNA and tracrRNA of type II CRISPR loci if present in the organism. This Acinetobacter baumannii (strain AB307-0294) protein is Ribonuclease 3 (rnc).